Here is a 556-residue protein sequence, read N- to C-terminus: MAQQQRMQGQPMIIMGDDAQRVKDRDAQEHNISAARAVADAVRSTLGPKGMDKMLVSSMGDVTVTNDGVTILQEMDIDNPTAEMIVEVAETQEDEAGDGTTTAVAIAGELLKNAEDLLERDIHPTAIIKGYNLAAEQAREEVDNVAVDVDPDDKDLIRSVAETSMTGKGAELDKELLSSIIYDAVNQVAVETNDGGIVVDAANINIETQTGHGVNESQLLRGAAISKDPVHDQMPAAVEDADVLLLNEAIEVEEAEADTSVNIESPDQLQSFLDQEEKQLKEKVQQIADTGANVVFCQKGIDDMAQHYLAKEGILAVRRTKKSDIEFLTNVLDASVVTDLDAASEADVVAGSVTRDSDDELFYVEGESEQAHGVTLLLRGSTDHVVDELERGVSDALDVSAQTLSDGRVLPGGGATEVEVASRLRDFADSVSGREQLAVEAFADSLELVPRVLAENAGLDSIDTLVDLRSAHENDDDEHIGLNVLSGDLEDTFEAGVVEPAHAKEQAVTSASEAANLVLKIDDIISAGDLSTDKGDDDGGAGGMGGGMGGGMGGMM.

Positions Leu-530–Met-556 are disordered. Over residues Gly-540–Met-556 the composition is skewed to gly residues.

This sequence belongs to the TCP-1 chaperonin family. Forms an oligomeric complex of eight-membered rings.

Functionally, molecular chaperone; binds unfolded polypeptides in vitro, and has a weak ATPase activity. The chain is Thermosome subunit beta (thsB) from Halobacterium salinarum (strain ATCC 700922 / JCM 11081 / NRC-1) (Halobacterium halobium).